A 334-amino-acid chain; its full sequence is Holliday junction branch migration complex subunit RuvB (334 aa).

The tract at residues 1–182 is large ATPase domain (RuvB-L); the sequence is MNERMVDQSM…FGVHLRLEYY (182 aa). ATP-binding positions include Leu21, Arg22, Gly63, Lys66, Thr67, Thr68, 129-131, Arg172, Tyr182, and Arg219; that span reads EDF. Thr67 contributes to the Mg(2+) binding site. Residues 183-253 form a small ATPAse domain (RuvB-S) region; it reads NESDLKEIII…TTKHALGLLQ (71 aa). The segment at 256–334 is head domain (RuvB-H); it reads QHGLDYIDHK…HFAKSNEERE (79 aa). Residues Arg292, Arg311, and Arg316 each contribute to the DNA site.

It belongs to the RuvB family. As to quaternary structure, homohexamer. Forms an RuvA(8)-RuvB(12)-Holliday junction (HJ) complex. HJ DNA is sandwiched between 2 RuvA tetramers; dsDNA enters through RuvA and exits via RuvB. An RuvB hexamer assembles on each DNA strand where it exits the tetramer. Each RuvB hexamer is contacted by two RuvA subunits (via domain III) on 2 adjacent RuvB subunits; this complex drives branch migration. In the full resolvosome a probable DNA-RuvA(4)-RuvB(12)-RuvC(2) complex forms which resolves the HJ.

The protein localises to the cytoplasm. The catalysed reaction is ATP + H2O = ADP + phosphate + H(+). Functionally, the RuvA-RuvB-RuvC complex processes Holliday junction (HJ) DNA during genetic recombination and DNA repair, while the RuvA-RuvB complex plays an important role in the rescue of blocked DNA replication forks via replication fork reversal (RFR). RuvA specifically binds to HJ cruciform DNA, conferring on it an open structure. The RuvB hexamer acts as an ATP-dependent pump, pulling dsDNA into and through the RuvAB complex. RuvB forms 2 homohexamers on either side of HJ DNA bound by 1 or 2 RuvA tetramers; 4 subunits per hexamer contact DNA at a time. Coordinated motions by a converter formed by DNA-disengaged RuvB subunits stimulates ATP hydrolysis and nucleotide exchange. Immobilization of the converter enables RuvB to convert the ATP-contained energy into a lever motion, pulling 2 nucleotides of DNA out of the RuvA tetramer per ATP hydrolyzed, thus driving DNA branch migration. The RuvB motors rotate together with the DNA substrate, which together with the progressing nucleotide cycle form the mechanistic basis for DNA recombination by continuous HJ branch migration. Branch migration allows RuvC to scan DNA until it finds its consensus sequence, where it cleaves and resolves cruciform DNA. The protein is Holliday junction branch migration complex subunit RuvB of Staphylococcus aureus (strain bovine RF122 / ET3-1).